Reading from the N-terminus, the 310-residue chain is L-lactate dehydrogenase (310 aa).

Residues Val-11, Asp-32, Tyr-62, and 76–77 (GV) contribute to the NAD(+) site. Residues Gln-79, Arg-85, and 117-120 (NPVD) each bind substrate. NAD(+)-binding positions include 115–117 (ATN) and Ser-140. Residue 145 to 148 (DTAR) participates in substrate binding. Beta-D-fructose 1,6-bisphosphate contacts are provided by Arg-150 and His-165. The Proton acceptor role is filled by His-172. At Tyr-218 the chain carries Phosphotyrosine. Thr-227 is a substrate binding site.

This sequence belongs to the LDH/MDH superfamily. LDH family. In terms of assembly, homotetramer.

The protein resides in the cytoplasm. It carries out the reaction (S)-lactate + NAD(+) = pyruvate + NADH + H(+). It functions in the pathway fermentation; pyruvate fermentation to lactate; (S)-lactate from pyruvate: step 1/1. Its activity is regulated as follows. Allosterically activated by fructose 1,6-bisphosphate (FBP). Its function is as follows. Catalyzes the conversion of lactate to pyruvate. The chain is L-lactate dehydrogenase from Thermus thermophilus (strain ATCC BAA-163 / DSM 7039 / HB27).